A 577-amino-acid polypeptide reads, in one-letter code: Arginine--tRNA ligase (577 aa).

The 'HIGH' region motif lies at 122–132; that stretch reads PNVAKEMHVGH.

This sequence belongs to the class-I aminoacyl-tRNA synthetase family. As to quaternary structure, monomer.

The protein localises to the cytoplasm. It carries out the reaction tRNA(Arg) + L-arginine + ATP = L-arginyl-tRNA(Arg) + AMP + diphosphate. This is Arginine--tRNA ligase from Salmonella dublin (strain CT_02021853).